A 140-amino-acid chain; its full sequence is Large ribosomal subunit protein uL11 (140 aa).

It belongs to the universal ribosomal protein uL11 family. Part of the ribosomal stalk of the 50S ribosomal subunit. Interacts with L10 and the large rRNA to form the base of the stalk. L10 forms an elongated spine to which L12 dimers bind in a sequential fashion forming a multimeric L10(L12)X complex. Post-translationally, one or more lysine residues are methylated.

Forms part of the ribosomal stalk which helps the ribosome interact with GTP-bound translation factors. The protein is Large ribosomal subunit protein uL11 of Desulforapulum autotrophicum (strain ATCC 43914 / DSM 3382 / VKM B-1955 / HRM2) (Desulfobacterium autotrophicum).